We begin with the raw amino-acid sequence, 447 residues long: Ribosomal protein uS12 methylthiotransferase RimO (447 aa).

The region spanning P15 to P125 is the MTTase N-terminal domain. The [4Fe-4S] cluster site is built by C24, C60, C89, C156, C160, and C163. One can recognise a Radical SAM core domain in the interval L142–K379. In terms of domain architecture, TRAM spans K379–I447.

The protein belongs to the methylthiotransferase family. RimO subfamily. It depends on [4Fe-4S] cluster as a cofactor.

The protein localises to the cytoplasm. It catalyses the reaction L-aspartate(89)-[ribosomal protein uS12]-hydrogen + (sulfur carrier)-SH + AH2 + 2 S-adenosyl-L-methionine = 3-methylsulfanyl-L-aspartate(89)-[ribosomal protein uS12]-hydrogen + (sulfur carrier)-H + 5'-deoxyadenosine + L-methionine + A + S-adenosyl-L-homocysteine + 2 H(+). Its function is as follows. Catalyzes the methylthiolation of an aspartic acid residue of ribosomal protein uS12. This Nitrosomonas europaea (strain ATCC 19718 / CIP 103999 / KCTC 2705 / NBRC 14298) protein is Ribosomal protein uS12 methylthiotransferase RimO.